The sequence spans 183 residues: Streptavidin-V2 (183 aa).

Residues 1 to 24 form the signal peptide; it reads MRKIVVAAIAVSLTTVGITASASA. Residues 37–159 enclose the Avidin-like domain; the sequence is AEAGITGTWY…GHDTFTKVKP (123 aa). 2 residues coordinate biotin: Y67 and Y78. The Cell attachment site; atypical motif lies at 83-85; the sequence is RYD. Positions 116, 132, and 144 each coordinate biotin.

The protein belongs to the avidin/streptavidin family. In terms of assembly, homotetramer.

It is found in the secreted. Its function is as follows. The biological function of streptavidin is not known. Forms a strong non-covalent specific complex with biotin (one molecule of biotin per subunit of streptavidin). This chain is Streptavidin-V2, found in Streptomyces violaceus (Streptomyces venezuelae).